The sequence spans 718 residues: Polyribonucleotide nucleotidyltransferase (718 aa).

Residues Asp-506 and Asp-512 each coordinate Mg(2+). The region spanning 572-632 is the KH domain; the sequence is PKLELFSVDP…EQIKAAKDYI (61 aa). The S1 motif domain maps to 657 to 718; that stretch reads GQEFQGIVKK…NGKISVDLCE (62 aa).

Belongs to the polyribonucleotide nucleotidyltransferase family. Mg(2+) serves as cofactor.

It is found in the cytoplasm. The enzyme catalyses RNA(n+1) + phosphate = RNA(n) + a ribonucleoside 5'-diphosphate. In terms of biological role, involved in mRNA degradation. Catalyzes the phosphorolysis of single-stranded polyribonucleotides processively in the 3'- to 5'-direction. This is Polyribonucleotide nucleotidyltransferase from Campylobacter jejuni subsp. doylei (strain ATCC BAA-1458 / RM4099 / 269.97).